A 245-amino-acid polypeptide reads, in one-letter code: tRNA pseudouridine synthase A (245 aa).

Asp52 serves as the catalytic Nucleophile. Tyr111 is a substrate binding site.

Belongs to the tRNA pseudouridine synthase TruA family. Homodimer.

It catalyses the reaction uridine(38/39/40) in tRNA = pseudouridine(38/39/40) in tRNA. Functionally, formation of pseudouridine at positions 38, 39 and 40 in the anticodon stem and loop of transfer RNAs. In Rickettsia africae (strain ESF-5), this protein is tRNA pseudouridine synthase A.